Consider the following 331-residue polypeptide: Putative phosphoribosylaminoimidazole-succinocarboxamide synthase (331 aa).

This sequence belongs to the SAICAR synthetase family. Highly divergent.

It carries out the reaction 5-amino-1-(5-phospho-D-ribosyl)imidazole-4-carboxylate + L-aspartate + ATP = (2S)-2-[5-amino-1-(5-phospho-beta-D-ribosyl)imidazole-4-carboxamido]succinate + ADP + phosphate + 2 H(+). Its pathway is purine metabolism; IMP biosynthesis via de novo pathway; 5-amino-1-(5-phospho-D-ribosyl)imidazole-4-carboxamide from 5-amino-1-(5-phospho-D-ribosyl)imidazole-4-carboxylate: step 1/2. In Archaeoglobus fulgidus (strain ATCC 49558 / DSM 4304 / JCM 9628 / NBRC 100126 / VC-16), this protein is Putative phosphoribosylaminoimidazole-succinocarboxamide synthase (purC).